The chain runs to 892 residues: Transposase for transposon Tn4556 (892 aa).

Residues 1–12 (MGGRAGLDDGRG) show a composition bias toward basic and acidic residues. The segment at 1–63 (MGGRAGLDDG…GQPARDAEHR (63 aa)) is disordered. Positions 23–34 (VAEGAAGAAAWG) are enriched in low complexity.

The protein belongs to the transposase 7 family.

In terms of biological role, required for transposition of transposon Tn4556. The chain is Transposase for transposon Tn4556 (tnpA) from Streptomyces fradiae (Streptomyces roseoflavus).